The sequence spans 239 residues: Ribosomal RNA large subunit methyltransferase E (239 aa).

Residues glycine 81, tryptophan 83, aspartate 104, aspartate 120, and aspartate 144 each contribute to the S-adenosyl-L-methionine site. Lysine 184 serves as the catalytic Proton acceptor.

The protein belongs to the class I-like SAM-binding methyltransferase superfamily. RNA methyltransferase RlmE family.

It is found in the cytoplasm. It carries out the reaction uridine(2552) in 23S rRNA + S-adenosyl-L-methionine = 2'-O-methyluridine(2552) in 23S rRNA + S-adenosyl-L-homocysteine + H(+). Specifically methylates the uridine in position 2552 of 23S rRNA at the 2'-O position of the ribose in the fully assembled 50S ribosomal subunit. The sequence is that of Ribosomal RNA large subunit methyltransferase E from Rhizobium rhizogenes (strain K84 / ATCC BAA-868) (Agrobacterium radiobacter).